Here is a 262-residue protein sequence, read N- to C-terminus: Merozoite surface protein 2 (262 aa).

The first 20 residues, 1–20 (MKVIKTLSIINFFIFVTFNI), serve as a signal peptide directing secretion. Asn-22 and Asn-36 each carry an N-linked (GlcNAc...) asparagine glycan. The segment at 44–188 (AESKPPTGTG…EQTESPELQS (145 aa)) is polymorphic region. The disordered stretch occupies residues 44-223 (AESKPPTGTG…DSQKECTDGN (180 aa)). Positions 51 to 66 (GTGGSGSAGSGAGASA) are enriched in gly residues. Residues 67–111 (GNGANPGADAERSPSTPATPATPATTTTTTTTNDAEASTSTSSEN) are compositionally biased toward low complexity. Basic and acidic residues predominate over residues 112–127 (PNHKNAETNPKGKGEV). 2 stretches are compositionally biased toward polar residues: residues 129–155 (KPNQANKETQNNSNVQQDSQTKSNVPP) and 162–190 (KSPTAQPEQAENSAPTAEQTESPELQSAP). An N-linked (GlcNAc...) asparagine glycan is attached at Asn-139. Asn-211 carries N-linked (GlcNAc...) asparagine glycosylation. Cys-219 and Cys-227 are oxidised to a cystine. 2 N-linked (GlcNAc...) asparagine glycosylation sites follow: Asn-235 and Asn-236. Asn-236 carries GPI-anchor amidated asparagine lipidation. Residues 237–262 (SSNIASINKFVVLISATLVLSFAIFI) constitute a propeptide, removed in mature form.

It is found in the cell membrane. Functionally, may play a role in the merozoite attachment to the erythrocyte. The sequence is that of Merozoite surface protein 2 from Plasmodium falciparum (isolate Camp / Malaysia).